The chain runs to 239 residues: 1-(5-phosphoribosyl)-5-[(5-phosphoribosylamino)methylideneamino] imidazole-4-carboxamide isomerase (239 aa).

The Proton acceptor role is filled by D12. The Proton donor role is filled by D133.

Belongs to the HisA/HisF family.

It localises to the cytoplasm. It carries out the reaction 1-(5-phospho-beta-D-ribosyl)-5-[(5-phospho-beta-D-ribosylamino)methylideneamino]imidazole-4-carboxamide = 5-[(5-phospho-1-deoxy-D-ribulos-1-ylimino)methylamino]-1-(5-phospho-beta-D-ribosyl)imidazole-4-carboxamide. It functions in the pathway amino-acid biosynthesis; L-histidine biosynthesis; L-histidine from 5-phospho-alpha-D-ribose 1-diphosphate: step 4/9. This is 1-(5-phosphoribosyl)-5-[(5-phosphoribosylamino)methylideneamino] imidazole-4-carboxamide isomerase from Sulfurihydrogenibium sp. (strain YO3AOP1).